The primary structure comprises 173 residues: MKKFLLLSLMSLASSTVFAASSTNTIGIVNLRRCLEESELGKKESAEFEKMKNQFSNSIGKMEEELSSIYSKLQDDDYMEGLSESAAAELRKKFEELSSEYNTAQGQYYQILNQNNLKRMQKIMEAVKKASEVVRIQEGLSALLNEDIVLAIDTSSDKTDAVIKILDDSFQNN.

Residues 1 to 19 (MKKFLLLSLMSLASSTVFA) form the signal peptide.

The protein belongs to the Skp family.

This Chlamydia muridarum (strain MoPn / Nigg) protein is Skp-like protein.